The chain runs to 1447 residues: DNA-directed RNA polymerase subunit beta' (1447 aa).

Residues cysteine 70, cysteine 72, cysteine 85, and cysteine 88 each contribute to the Zn(2+) site. Residues aspartate 460, aspartate 462, and aspartate 464 each coordinate Mg(2+). 4 residues coordinate Zn(2+): cysteine 890, cysteine 964, cysteine 971, and cysteine 974.

Belongs to the RNA polymerase beta' chain family. The RNAP catalytic core consists of 2 alpha, 1 beta, 1 beta' and 1 omega subunit. When a sigma factor is associated with the core the holoenzyme is formed, which can initiate transcription. Mg(2+) serves as cofactor. Zn(2+) is required as a cofactor.

The catalysed reaction is RNA(n) + a ribonucleoside 5'-triphosphate = RNA(n+1) + diphosphate. In terms of biological role, DNA-dependent RNA polymerase catalyzes the transcription of DNA into RNA using the four ribonucleoside triphosphates as substrates. In Desulfosudis oleivorans (strain DSM 6200 / JCM 39069 / Hxd3) (Desulfococcus oleovorans), this protein is DNA-directed RNA polymerase subunit beta'.